Here is a 365-residue protein sequence, read N- to C-terminus: 3-dehydroquinate synthase (365 aa).

NAD(+) contacts are provided by residues 69-74 (DGEAHK), 103-107 (GVIGD), 127-128 (TT), Lys140, and Lys149. Residues Glu182, His245, and His262 each contribute to the Zn(2+) site.

It belongs to the sugar phosphate cyclases superfamily. Dehydroquinate synthase family. The cofactor is NAD(+). It depends on Co(2+) as a cofactor. Zn(2+) is required as a cofactor.

It localises to the cytoplasm. It catalyses the reaction 7-phospho-2-dehydro-3-deoxy-D-arabino-heptonate = 3-dehydroquinate + phosphate. It participates in metabolic intermediate biosynthesis; chorismate biosynthesis; chorismate from D-erythrose 4-phosphate and phosphoenolpyruvate: step 2/7. Functionally, catalyzes the conversion of 3-deoxy-D-arabino-heptulosonate 7-phosphate (DAHP) to dehydroquinate (DHQ). The polypeptide is 3-dehydroquinate synthase (Pseudomonas putida (strain ATCC 47054 / DSM 6125 / CFBP 8728 / NCIMB 11950 / KT2440)).